The following is a 492-amino-acid chain: Protein nucleotidyltransferase YdiU (492 aa).

ATP is bound by residues G91, G93, R94, K114, D126, G127, R177, and R184. The active-site Proton acceptor is D253. Mg(2+)-binding residues include N254 and D263. D263 serves as a coordination point for ATP.

The protein belongs to the SELO family. The cofactor is Mg(2+). Mn(2+) is required as a cofactor.

It carries out the reaction L-seryl-[protein] + ATP = 3-O-(5'-adenylyl)-L-seryl-[protein] + diphosphate. It catalyses the reaction L-threonyl-[protein] + ATP = 3-O-(5'-adenylyl)-L-threonyl-[protein] + diphosphate. The enzyme catalyses L-tyrosyl-[protein] + ATP = O-(5'-adenylyl)-L-tyrosyl-[protein] + diphosphate. The catalysed reaction is L-histidyl-[protein] + UTP = N(tele)-(5'-uridylyl)-L-histidyl-[protein] + diphosphate. It carries out the reaction L-seryl-[protein] + UTP = O-(5'-uridylyl)-L-seryl-[protein] + diphosphate. It catalyses the reaction L-tyrosyl-[protein] + UTP = O-(5'-uridylyl)-L-tyrosyl-[protein] + diphosphate. Functionally, nucleotidyltransferase involved in the post-translational modification of proteins. It can catalyze the addition of adenosine monophosphate (AMP) or uridine monophosphate (UMP) to a protein, resulting in modifications known as AMPylation and UMPylation. The chain is Protein nucleotidyltransferase YdiU from Maridesulfovibrio salexigens (strain ATCC 14822 / DSM 2638 / NCIMB 8403 / VKM B-1763) (Desulfovibrio salexigens).